A 265-amino-acid polypeptide reads, in one-letter code: Asparagine-rich protein (265 aa).

Residues Met-1–Gly-21 form the signal peptide. Disordered regions lie at residues His-20–Ile-71 and Ser-88–Tyr-183. Basic and acidic residues-rich tracts occupy residues Gln-22 to Gly-35 and Glu-44 to Arg-55. The segment covering Ser-88–Ser-98 has biased composition (low complexity). Residues Asn-115–Gly-124 show a composition bias toward basic and acidic residues. The segment covering Lys-152–Pro-166 has biased composition (basic residues).

Nacreous layer of shell (at protein level). Expressed primarily in the mantle with highest level in the mantle pallium and lower level in the mantle edge.

It localises to the secreted. The protein is Asparagine-rich protein of Pinctada maxima (Silver-lipped pearl oyster).